We begin with the raw amino-acid sequence, 534 residues long: Phenylalanine N-monooxygenase CYP79D16 (534 aa).

An N-terminal signal peptide occupies residues 1–21; the sequence is MEANVGFLTLCLAITLVRFLM. A heme-binding site is contributed by C472. N500 is a glycosylation site (N-linked (GlcNAc...) asparagine).

This sequence belongs to the cytochrome P450 family. Heme is required as a cofactor. In terms of tissue distribution, expressed in seedlings.

The catalysed reaction is L-phenylalanine + 2 reduced [NADPH--hemoprotein reductase] + 2 O2 = (E)-phenylacetaldehyde oxime + 2 oxidized [NADPH--hemoprotein reductase] + CO2 + 3 H2O + 2 H(+). Involved in L-phenylalanine-derived cyanogenic glycoside biosynthesis, including prunasin and amygdalin defensive agents. Catalyzes the conversion of L-phenylalanine (Phe) into phenylacetaldoxime (PAOx). Cannot use tyrosine (Tyr), tryptophan (Trp) and valine (Val) as substrates. The protein is Phenylalanine N-monooxygenase CYP79D16 of Prunus mume (Japanese apricot).